Reading from the N-terminus, the 303-residue chain is Elongation factor Ts (303 aa).

The involved in Mg(2+) ion dislocation from EF-Tu stretch occupies residues 81–84 (TDFV).

It belongs to the EF-Ts family.

The protein localises to the cytoplasm. Associates with the EF-Tu.GDP complex and induces the exchange of GDP to GTP. It remains bound to the aminoacyl-tRNA.EF-Tu.GTP complex up to the GTP hydrolysis stage on the ribosome. This chain is Elongation factor Ts, found in Mesomycoplasma hyopneumoniae (strain 7448) (Mycoplasma hyopneumoniae).